The following is a 216-amino-acid chain: Adenylate kinase (216 aa).

10 to 15 (GAGKGT) contacts ATP. Residues 30–59 (STGDMFRAAIKEGTPLGLQAKEYMDRGDLV) form an NMP region. AMP-binding positions include Thr31, Arg36, 57-59 (DLV), 85-88 (GFPR), and Gln92. Residues 126–163 (GRRICKNCGATYHLVFNPPAKSGVCDKCGGELYQRADD) are LID. Arg127 contacts ATP. Zn(2+) contacts are provided by Cys130 and Cys133. 136 to 137 (TY) is a binding site for ATP. The Zn(2+) site is built by Cys150 and Cys153. The AMP site is built by Arg160 and Arg171. An ATP-binding site is contributed by Gln199.

It belongs to the adenylate kinase family. Monomer.

It localises to the cytoplasm. It catalyses the reaction AMP + ATP = 2 ADP. It participates in purine metabolism; AMP biosynthesis via salvage pathway; AMP from ADP: step 1/1. In terms of biological role, catalyzes the reversible transfer of the terminal phosphate group between ATP and AMP. Plays an important role in cellular energy homeostasis and in adenine nucleotide metabolism. This Geobacillus sp. (strain WCH70) protein is Adenylate kinase.